Here is a 433-residue protein sequence, read N- to C-terminus: Trigger factor (433 aa).

In terms of domain architecture, PPIase FKBP-type spans 163-248; it reads GDTVNIDFSG…VNEIKFKEVP (86 aa).

This sequence belongs to the FKBP-type PPIase family. Tig subfamily.

The protein resides in the cytoplasm. The catalysed reaction is [protein]-peptidylproline (omega=180) = [protein]-peptidylproline (omega=0). In terms of biological role, involved in protein export. Acts as a chaperone by maintaining the newly synthesized protein in an open conformation. Functions as a peptidyl-prolyl cis-trans isomerase. The chain is Trigger factor from Staphylococcus aureus (strain Newman).